We begin with the raw amino-acid sequence, 427 residues long: Probable protein phosphatase 2C 64 (427 aa).

The tract at residues 1-36 (MGNCVARSGTAVDAGGDGGEDGKRRRRRWKAPREDQ) is disordered. Positions 53–331 (TATVYTQQGR…DDCAVVCLYL (279 aa)) constitute a PPM-type phosphatase domain. Mn(2+) is bound by residues Asp-89, Gly-90, Asp-276, and Asp-322.

Belongs to the PP2C family. Mg(2+) is required as a cofactor. Mn(2+) serves as cofactor.

The enzyme catalyses O-phospho-L-seryl-[protein] + H2O = L-seryl-[protein] + phosphate. It carries out the reaction O-phospho-L-threonyl-[protein] + H2O = L-threonyl-[protein] + phosphate. The sequence is that of Probable protein phosphatase 2C 64 from Oryza sativa subsp. japonica (Rice).